Reading from the N-terminus, the 932-residue chain is Phosphoenolpyruvate carboxylase (932 aa).

Catalysis depends on residues histidine 164 and lysine 594.

This sequence belongs to the PEPCase type 1 family. The cofactor is Mg(2+).

It carries out the reaction oxaloacetate + phosphate = phosphoenolpyruvate + hydrogencarbonate. In terms of biological role, forms oxaloacetate, a four-carbon dicarboxylic acid source for the tricarboxylic acid cycle. The polypeptide is Phosphoenolpyruvate carboxylase (Bradyrhizobium diazoefficiens (strain JCM 10833 / BCRC 13528 / IAM 13628 / NBRC 14792 / USDA 110)).